The chain runs to 344 residues: Phenylalanine--tRNA ligase alpha subunit (344 aa).

A Mg(2+)-binding site is contributed by E256.

Belongs to the class-II aminoacyl-tRNA synthetase family. Phe-tRNA synthetase alpha subunit type 1 subfamily. Tetramer of two alpha and two beta subunits. It depends on Mg(2+) as a cofactor.

Its subcellular location is the cytoplasm. It catalyses the reaction tRNA(Phe) + L-phenylalanine + ATP = L-phenylalanyl-tRNA(Phe) + AMP + diphosphate + H(+). The protein is Phenylalanine--tRNA ligase alpha subunit of Bacillus cytotoxicus (strain DSM 22905 / CIP 110041 / 391-98 / NVH 391-98).